The chain runs to 422 residues: MACARPLISVYSEKGESSGKNVTLPAVFKAPIRPDIVNFVHTNLRKNNRQPYAVSELAGHQTSAESWGTGRAVARIPRVRGGGTHRSGQGAFGNMCRGGRMFAPTKTWRRWHRRVNTTQKRYAICSALAASALPALVMSKGHRIEEVPELPLVVEDKVEGYKKTKEAVLLLKKLKAWNDIKKVYASQRMRAGKGKMRNRRRIQRRGPCIIYNEDNGIIKAFRNIPGITLLNVSKLNILKLAPGGHVGRFCIWTESAFRKLDELYGTWRKAASLKSNYNLPMHKMLNTDLSRILKSPEIQRALRAPRKKIHRRVLKKNPLKNLRIMLKLNPYAKTMRRNTILRQARNHKIRMDKAAAALEAKSDQKGVQGKKPVVGNKEKKAVGDKKLKKPVVGKKAAGTKKPAAEKKPTEKKPTSEEKKAAA.

Position 2 is an N-acetylalanine (alanine 2). At lysine 14 the chain carries N6-acetyllysine. Arginine 97 carries the omega-N-methylarginine modification. The residue at position 106 (lysine 106) is an N6-acetyllysine. A Glycyl lysine isopeptide (Lys-Gly) (interchain with G-Cter in SUMO2) cross-link involves residue lysine 239. Lysine 259 is modified (N6-acetyllysine). Threonine 266 bears the Phosphothreonine mark. Phosphoserine is present on residues serine 290 and serine 295. At arginine 300 the chain carries Citrulline. A Glycyl lysine isopeptide (Lys-Gly) (interchain with G-Cter in SUMO2) cross-link involves residue lysine 327. N6-acetyllysine is present on residues lysine 333 and lysine 353. Residues 359–422 (EAKSDQKGVQ…PTSEEKKAAA (64 aa)) are disordered. Lysine 361 carries the N6-acetyllysine; alternate modification. Lysine 361 participates in a covalent cross-link: Glycyl lysine isopeptide (Lys-Gly) (interchain with G-Cter in SUMO1); alternate. Serine 362 is modified (phosphoserine). Composition is skewed to basic and acidic residues over residues 376–385 (NKEKKAVGDK) and 402–422 (PAAE…KAAA).

This sequence belongs to the universal ribosomal protein uL4 family. In terms of assembly, component of the large ribosomal subunit. May bind IPO9 with low affinity. Interacts with RBM3. Post-translationally, citrullinated by PADI4.

It is found in the cytoplasm. In terms of biological role, component of the large ribosomal subunit. The ribosome is a large ribonucleoprotein complex responsible for the synthesis of proteins in the cell. This Bos taurus (Bovine) protein is Large ribosomal subunit protein uL4 (RPL4).